Here is a 432-residue protein sequence, read N- to C-terminus: Putative D-alanyl-D-alanine carboxypeptidase (432 aa).

The chain crosses the membrane as a helical; Signal-anchor span at residues 7–25 (ATVLLTFSLSAFAVEYPVL).

This sequence belongs to the peptidase S12 family. YfeW subfamily.

Its subcellular location is the cell inner membrane. The enzyme catalyses Preferential cleavage: (Ac)2-L-Lys-D-Ala-|-D-Ala. Also transpeptidation of peptidyl-alanyl moieties that are N-acyl substituents of D-alanine.. This Salmonella typhi protein is Putative D-alanyl-D-alanine carboxypeptidase.